We begin with the raw amino-acid sequence, 1003 residues long: MWEKMETKTIVYDLDTSGGLMEQIQALLAPPKTDEAEKRSRKPEKESRRSGRATNHDSCDSCKEGGDLLCCDHCPAAFHLQCCNPPLSEEMLPPGEWMCHRCTVRRKKREQKKELGHVNGLVDKSSKRTTSPSSDTDLLDRPASKTELKAIAHARILERRASRPGTPTSNASTETPTSEHNDVDEDIVDVDEEPVAAEPDYVQPQLRRPFELLIAAAMERNPTQFQLPNELTCTTALPGSSKRRRKEETTGKNVKRTQHELDHNGLVPLPVKVCFTCNRSCRVAPLIQCDYCPLLFHMDCLEPPLTAMPLGRWMCPNHIEHVVLNQKNLTLSNRCQVFDRFQDTISQHVVKVDFLNRIHKKHPPNRRVLQSVKRRSLKVPDAIKSQYQFPPPLIAPAAIRDGELICSGVPEESQTHLLNSEHLATQAEQQEWLCSVVALQCSILKHLSAKQMPSPWDSEQTEKADIKPVIVTDSSITTSLQTADKAPLPSHYPLSCPSAVSTQNSLGCSPPHQPPTLEDISCSSCVEKSKKAPCGTANGPVNTEIKANGPHLYSSPTDSTDPRRLPGANTPLPGLTHRQGWPRPLTPPSAGGLQNHVGIIVKTENATGPSSCPQRSLVPVPSLPPSIPSSCASIENTSTLHRKTVQSQIGPSSTESRPLGSPPNATRVLTPPQAAGDSILATGANQRFCSPAPSSDGKVSPGTLSIGSALTVPSFPANSTAMVDLTNSLRAFMDVNGEIEINMLDEKLIKFLALQRVHQLFPSRVQASPGNVGTHPLASGGHHPEVQRKEVQARAVFCPLLGLGGAVNMCYRTLYIGTGADMDVCLTNYGHCNYVSGKHACIFYDENTKHYELLNYSEHGTTVDNVLYSCDFSEKTPPTPPSSIVAKVQSVIRRRRHQKQDEEPSEEAAMMSSQAQGPQRRPCNCKASSSSLIGGSGAGWEGTALLHHGSYIKLGCLQFVFSITEFATKQPKGDASLLQDGVLAEKLSLKPHQGPVLRSNSVP.

The disordered stretch occupies residues Ala-29–Cys-59. Residues Lys-32–Cys-59 are compositionally biased toward basic and acidic residues. A PHD-type 1 zinc finger spans residues His-56–Arg-105. Zn(2+) is bound by residues Cys-59, Ser-61, Cys-62, His-79, and Cys-82. Disordered stretches follow at residues Glu-110–Val-183 and Thr-234–Lys-255. Phosphoserine is present on residues Ser-131 and Ser-134. Over residues Leu-138–Ala-161 the composition is skewed to basic and acidic residues. A compositionally biased stretch (polar residues) spans Gly-165–Ser-178. The SIN3 interacting domain 1 stretch occupies residues Val-202–Ser-241. Residues Val-271–His-321 form a PHD-type 2; atypical zinc finger. Cys-274, Cys-277, Cys-289, Cys-292, His-297, Cys-300, Cys-315, and His-318 together coordinate Zn(2+). Residues Asn-328–Pro-364 form an SIN3 interacting domain 2 region. Lys-467 is covalently cross-linked (Glycyl lysine isopeptide (Lys-Gly) (interchain with G-Cter in SUMO2)). Disordered regions lie at residues Lys-531–Arg-583 and His-641–Pro-671. Residue Ser-555 is modified to Phosphoserine. 2 positions are modified to phosphothreonine: Thr-557 and Thr-570. Positions His-641 to Ser-656 are enriched in polar residues. Phosphothreonine is present on Thr-670. The FHA domain maps to Leu-814–Tyr-868. A disordered region spans residues Arg-894 to Pro-922. Lys-899 participates in a covalent cross-link: Glycyl lysine isopeptide (Lys-Gly) (interchain with G-Cter in SUMO2). Residues Glu-907–Gln-916 show a composition bias toward low complexity. Residues Lys-972, Lys-986, and Lys-990 each participate in a glycyl lysine isopeptide (Lys-Gly) (interchain with G-Cter in SUMO2) cross-link.

As to quaternary structure, component of SIN3 complexes. Interacts with SIN3A in a complex composed of HDAC1, SAP30 and SIN3A. Component of the SIN3B complex, which includes SIN3B, HDAC2 or HDAC1, PHF12 and MORF4L1; interacts directly with all subunits. Interacts with TLE5. In terms of tissue distribution, expressed mainly in heart, brain, lung, liver and testis.

The protein resides in the nucleus. Transcriptional repressor acting as key scaffolding subunit of SIN3 complexes which contributes to complex assembly by contacting each core subunit domain, stabilizes the complex and constitutes the substrate receptor by recruiting the H3 histone tail. SIN3 complexes are composed of a SIN3 scaffold subunit, one catalytic core (HDAC1 or HDAC2) and 2 chromatin targeting modules. SIN3B complex represses transcription and counteracts the histone acetyltransferase activity of EP300 through the recognition H3K27ac marks by PHF12 and the activity of the histone deacetylase HDAC2. SIN3B complex is recruited downstream of the constitutively active genes transcriptional start sites through interaction with histones and mitigates histone acetylation and RNA polymerase II progression within transcribed regions contributing to the regulation of transcription. May also repress transcription in a SIN3A-independent manner through recruitment of functional TLE5 complexes to DNA. May also play a role in ribosomal biogenesis. In Mus musculus (Mouse), this protein is PHD finger protein 12.